We begin with the raw amino-acid sequence, 196 residues long: Pyroglutamyl-peptidase 1-like protein (196 aa).

Residues Glu65, Cys127, and His146 contribute to the active site.

This sequence belongs to the peptidase C15 family.

This chain is Pyroglutamyl-peptidase 1-like protein (PGPEP1L), found in Homo sapiens (Human).